A 532-amino-acid chain; its full sequence is Probable C4-dicarboxylate sensor kinase (532 aa).

Over 1–12 (MRLFRQLSIQWK) the chain is Cytoplasmic. Residues 13-33 (ITILSFGIVAFALMMVSISLL) traverse the membrane as a helical segment. The Extracellular segment spans residues 34-175 (GYVTSIKEDE…YADMIQEFWQ (142 aa)). A helical membrane pass occupies residues 176-196 (PALLIGLITALFGFWGSWLLA). Topologically, residues 197-532 (SHIKRQTFNM…FSIYLPKKRG (336 aa)) are cytoplasmic. The PAS domain maps to 216 to 279 (VERDASFNAI…PEILSIGKPL (64 aa)). A Histidine kinase domain is found at 315-531 (SDVDRLAEEL…TFSIYLPKKR (217 aa)). At His-339 the chain carries Phosphohistidine; by autocatalysis.

It is found in the cell membrane. It catalyses the reaction ATP + protein L-histidine = ADP + protein N-phospho-L-histidine.. Functionally, member of the two-component regulatory system DctS/DctR. Probably activates DctR by phosphorylation. Essential for expression of dctP. The protein is Probable C4-dicarboxylate sensor kinase (dctS) of Halalkalibacterium halodurans (strain ATCC BAA-125 / DSM 18197 / FERM 7344 / JCM 9153 / C-125) (Bacillus halodurans).